A 179-amino-acid polypeptide reads, in one-letter code: Adenine phosphoribosyltransferase (179 aa).

It belongs to the purine/pyrimidine phosphoribosyltransferase family. As to quaternary structure, homodimer.

The protein localises to the cytoplasm. The catalysed reaction is AMP + diphosphate = 5-phospho-alpha-D-ribose 1-diphosphate + adenine. The protein operates within purine metabolism; AMP biosynthesis via salvage pathway; AMP from adenine: step 1/1. In terms of biological role, catalyzes a salvage reaction resulting in the formation of AMP, that is energically less costly than de novo synthesis. The protein is Adenine phosphoribosyltransferase of Mycolicibacterium gilvum (strain PYR-GCK) (Mycobacterium gilvum (strain PYR-GCK)).